The following is a 505-amino-acid chain: Glycerol kinase (505 aa).

Threonine 14 contributes to the ADP binding site. Threonine 14, threonine 15, and serine 16 together coordinate ATP. Threonine 14 is a binding site for sn-glycerol 3-phosphate. Arginine 18 lines the ADP pocket. Arginine 84, glutamate 85, tyrosine 136, and aspartate 246 together coordinate sn-glycerol 3-phosphate. Residues arginine 84, glutamate 85, tyrosine 136, aspartate 246, and glutamine 247 each contribute to the glycerol site. ADP contacts are provided by threonine 268 and glycine 311. The ATP site is built by threonine 268, glycine 311, glutamine 315, and glycine 412. ADP contacts are provided by glycine 412 and asparagine 416.

The protein belongs to the FGGY kinase family.

It carries out the reaction glycerol + ATP = sn-glycerol 3-phosphate + ADP + H(+). The protein operates within polyol metabolism; glycerol degradation via glycerol kinase pathway; sn-glycerol 3-phosphate from glycerol: step 1/1. Inhibited by fructose 1,6-bisphosphate (FBP). Key enzyme in the regulation of glycerol uptake and metabolism. Catalyzes the phosphorylation of glycerol to yield sn-glycerol 3-phosphate. In Vibrio cholerae serotype O1 (strain ATCC 39315 / El Tor Inaba N16961), this protein is Glycerol kinase.